Here is a 143-residue protein sequence, read N- to C-terminus: Acetyltransferase plu1384 (143 aa).

The region spanning Met-1–Ile-138 is the N-acetyltransferase domain.

This sequence belongs to the acetyltransferase family. YpeA subfamily.

This is Acetyltransferase plu1384 from Photorhabdus laumondii subsp. laumondii (strain DSM 15139 / CIP 105565 / TT01) (Photorhabdus luminescens subsp. laumondii).